Here is a 221-residue protein sequence, read N- to C-terminus: 7-cyano-7-deazaguanine synthase (221 aa).

10 to 20 (FSGGQDSTTCL) contacts ATP. Zn(2+) is bound by residues Cys-186, Cys-195, Cys-198, and Cys-201.

The protein belongs to the QueC family. As to quaternary structure, homodimer. Requires Zn(2+) as cofactor.

It carries out the reaction 7-carboxy-7-deazaguanine + NH4(+) + ATP = 7-cyano-7-deazaguanine + ADP + phosphate + H2O + H(+). It functions in the pathway purine metabolism; 7-cyano-7-deazaguanine biosynthesis. Catalyzes the ATP-dependent conversion of 7-carboxy-7-deazaguanine (CDG) to 7-cyano-7-deazaguanine (preQ(0)). This is 7-cyano-7-deazaguanine synthase from Geobacillus thermodenitrificans (strain NG80-2).